A 505-amino-acid polypeptide reads, in one-letter code: Phosphoethanolamine N-methyltransferase (505 aa).

Residues Gly-76, Arg-81, Asp-97, Asp-122, Val-123, and Asn-141 each coordinate S-adenosyl-L-homocysteine. 5 residues coordinate phosphocholine: Ser-174, Ser-179, Gly-180, Arg-184, and Tyr-191. N-methylethanolamine phosphate-binding positions include 260–261 (QY) and Tyr-269. Phosphocholine is bound at residue Tyr-269. S-adenosyl-L-homocysteine is bound by residues Val-278, Ser-279, Gly-305, Asp-327, Asp-353, Cys-354, and Arg-370. Phosphocholine is bound by residues Tyr-401, Tyr-415, Arg-419, Tyr-421, and Lys-487. N-methylethanolamine phosphate is bound by residues Tyr-401, Tyr-415, 419–421 (RGY), and Lys-487.

It belongs to the class I-like SAM-binding methyltransferase superfamily. PEAMT family.

It catalyses the reaction phosphoethanolamine + S-adenosyl-L-methionine = N-methylethanolamine phosphate + S-adenosyl-L-homocysteine + H(+). It carries out the reaction N-methylethanolamine phosphate + S-adenosyl-L-methionine = N,N-dimethylethanolamine phosphate + S-adenosyl-L-homocysteine + H(+). The enzyme catalyses N,N-dimethylethanolamine phosphate + S-adenosyl-L-methionine = phosphocholine + S-adenosyl-L-homocysteine + H(+). It functions in the pathway phospholipid metabolism; phosphatidylcholine biosynthesis; phosphocholine from phosphoethanolamine: step 1/1. With respect to regulation, inhibited by phosphatidic acid. Involved in phosphocholine biosynthesis. Catalyzes the N-methylation of phosphoethanolamine, phosphomonomethylethanolamine and phosphodimethylethanolamine, the three methylation steps required to convert phosphoethanolamine to phosphocholine (PC). The sequence is that of Phosphoethanolamine N-methyltransferase from Triticum aestivum (Wheat).